The sequence spans 219 residues: Chalcone--flavanone isomerase (219 aa).

Positions 50, 115, and 188 each coordinate substrate.

It belongs to the chalcone isomerase family.

It carries out the reaction a chalcone = a flavanone.. It participates in secondary metabolite biosynthesis; flavonoid biosynthesis. Functionally, catalyzes the intramolecular cyclization of bicyclic chalcones into tricyclic (S)-flavanones. Responsible for the isomerization of 4,2',4',6'-tetrahydroxychalcone (also termed chalcone) into naringenin. The sequence is that of Chalcone--flavanone isomerase (CHI) from Clitoria ternatea (Butterfly pea).